The primary structure comprises 364 residues: Ribosomal RNA large subunit methyltransferase M (364 aa).

Residues S187, C220–G223, D239, D259, and D276 each bind S-adenosyl-L-methionine. K305 functions as the Proton acceptor in the catalytic mechanism.

Belongs to the class I-like SAM-binding methyltransferase superfamily. RNA methyltransferase RlmE family. RlmM subfamily. In terms of assembly, monomer.

It is found in the cytoplasm. It carries out the reaction cytidine(2498) in 23S rRNA + S-adenosyl-L-methionine = 2'-O-methylcytidine(2498) in 23S rRNA + S-adenosyl-L-homocysteine + H(+). Its function is as follows. Catalyzes the 2'-O-methylation at nucleotide C2498 in 23S rRNA. This Aeromonas hydrophila subsp. hydrophila (strain ATCC 7966 / DSM 30187 / BCRC 13018 / CCUG 14551 / JCM 1027 / KCTC 2358 / NCIMB 9240 / NCTC 8049) protein is Ribosomal RNA large subunit methyltransferase M.